The following is a 318-amino-acid chain: uncharacterized protein (318 aa).

Belongs to the glycosyltransferase 2 family.

This is an uncharacterized protein from Rickettsia prowazekii (strain Madrid E).